Reading from the N-terminus, the 323-residue chain is Germacrene A synthase (323 aa).

Residues Asp82, Asp86, Asn222, Ser226, and Glu230 each coordinate Mg(2+). A DDXXD motif motif is present at residues 82 to 86; sequence DDQCD.

The protein belongs to the terpene synthase family. The cofactor is Mg(2+).

The enzyme catalyses (2E,6E)-farnesyl diphosphate = 5-epi-alpha-selinene + diphosphate. Its function is as follows. Catalyzes the cyclization of farnesyl diphosphate (FPP) to the sesquiterpene germacrene A. This Nostoc punctiforme (strain ATCC 29133 / PCC 73102) protein is Germacrene A synthase.